We begin with the raw amino-acid sequence, 198 residues long: Na(+)-translocating NADH-quinone reductase subunit E (198 aa).

A run of 6 helical transmembrane segments spans residues 11-31 (AVFI…FLAV), 35-55 (VSPA…AVPV), 77-97 (FLNF…LEMV), 110-130 (GIFL…SFMV), 140-160 (IVYG…LAGL), and 176-196 (LGIT…FSGI).

This sequence belongs to the NqrDE/RnfAE family. Composed of six subunits; NqrA, NqrB, NqrC, NqrD, NqrE and NqrF.

Its subcellular location is the cell inner membrane. It carries out the reaction a ubiquinone + n Na(+)(in) + NADH + H(+) = a ubiquinol + n Na(+)(out) + NAD(+). NQR complex catalyzes the reduction of ubiquinone-1 to ubiquinol by two successive reactions, coupled with the transport of Na(+) ions from the cytoplasm to the periplasm. NqrA to NqrE are probably involved in the second step, the conversion of ubisemiquinone to ubiquinol. This is Na(+)-translocating NADH-quinone reductase subunit E from Haemophilus influenzae (strain ATCC 51907 / DSM 11121 / KW20 / Rd).